The chain runs to 932 residues: Protein translocase subunit SecA (932 aa).

Residues Q87, 105–109, and D515 contribute to the ATP site; that span reads GEGKT. Zn(2+) is bound by residues C916, C918, C927, and H928.

This sequence belongs to the SecA family. In terms of assembly, monomer and homodimer. Part of the essential Sec protein translocation apparatus which comprises SecA, SecYEG and auxiliary proteins SecDF-YajC and YidC. Zn(2+) serves as cofactor.

It localises to the cell inner membrane. The protein localises to the cytoplasm. The enzyme catalyses ATP + H2O + cellular proteinSide 1 = ADP + phosphate + cellular proteinSide 2.. Functionally, part of the Sec protein translocase complex. Interacts with the SecYEG preprotein conducting channel. Has a central role in coupling the hydrolysis of ATP to the transfer of proteins into and across the cell membrane, serving both as a receptor for the preprotein-SecB complex and as an ATP-driven molecular motor driving the stepwise translocation of polypeptide chains across the membrane. The protein is Protein translocase subunit SecA of Burkholderia lata (strain ATCC 17760 / DSM 23089 / LMG 22485 / NCIMB 9086 / R18194 / 383).